Here is a 156-residue protein sequence, read N- to C-terminus: ATP synthase subunit b (156 aa).

Residues 7–29 (LIGQMGTFLVFWWFVNKVIWPMF) form a helical membrane-spanning segment.

This sequence belongs to the ATPase B chain family. As to quaternary structure, F-type ATPases have 2 components, F(1) - the catalytic core - and F(0) - the membrane proton channel. F(1) has five subunits: alpha(3), beta(3), gamma(1), delta(1), epsilon(1). F(0) has three main subunits: a(1), b(2) and c(10-14). The alpha and beta chains form an alternating ring which encloses part of the gamma chain. F(1) is attached to F(0) by a central stalk formed by the gamma and epsilon chains, while a peripheral stalk is formed by the delta and b chains.

Its subcellular location is the cell inner membrane. Its function is as follows. F(1)F(0) ATP synthase produces ATP from ADP in the presence of a proton or sodium gradient. F-type ATPases consist of two structural domains, F(1) containing the extramembraneous catalytic core and F(0) containing the membrane proton channel, linked together by a central stalk and a peripheral stalk. During catalysis, ATP synthesis in the catalytic domain of F(1) is coupled via a rotary mechanism of the central stalk subunits to proton translocation. In terms of biological role, component of the F(0) channel, it forms part of the peripheral stalk, linking F(1) to F(0). This chain is ATP synthase subunit b, found in Dichelobacter nodosus (strain VCS1703A).